Reading from the N-terminus, the 402-residue chain is D-galactonate dehydratase family member EGBG_02030 (402 aa).

Residue aspartate 207 coordinates Mg(2+). D-arabinonate is bound at residue histidine 209. Glutamate 233 and glutamate 259 together coordinate Mg(2+). Positions 259, 280, 309, and 336 each coordinate D-arabinonate.

Belongs to the mandelate racemase/muconate lactonizing enzyme family. GalD subfamily.

Functionally, has no detectable activity with D-mannonate and with a panel of 70 other acid sugars (in vitro), in spite of the conservation of the residues that are expected to be important for catalytic activity and cofactor binding. May have evolved a divergent function. The polypeptide is D-galactonate dehydratase family member EGBG_02030 (Enterococcus gallinarum (strain EG2)).